The following is a 247-amino-acid chain: UPF0309 protein Lm4b_02611 (247 aa).

The SIS domain occupies 31 to 214; sequence VAESIENDGV…ETMVNDNFTP (184 aa).

The protein belongs to the UPF0309 family.

This is UPF0309 protein Lm4b_02611 from Listeria monocytogenes serotype 4b (strain CLIP80459).